The following is a 479-amino-acid chain: Chromosomal replication initiator protein DnaA (479 aa).

The segment at 1 to 74 (MFSGVVMAWQ…RSLTGVDSSI (74 aa)) is domain I, interacts with DnaA modulators. A domain II region spans residues 74-142 (ITDVRFLEKK…SVPKNNASIR (69 aa)). Positions 143–360 (ALHPRYTFDE…SAITAIGARA (218 aa)) are domain III, AAA+ region. Residues Gly-187, Gly-189, Lys-190, and Ser-191 each contribute to the ATP site. The interval 361-479 (RLMGGYIDMN…NLLSDKVKQI (119 aa)) is domain IV, binds dsDNA.

This sequence belongs to the DnaA family. As to quaternary structure, oligomerizes as a right-handed, spiral filament on DNA at oriC.

It localises to the cytoplasm. Its function is as follows. Plays an essential role in the initiation and regulation of chromosomal replication. ATP-DnaA binds to the origin of replication (oriC) to initiate formation of the DNA replication initiation complex once per cell cycle. Binds the DnaA box (a 9 base pair repeat at the origin) and separates the double-stranded (ds)DNA. Forms a right-handed helical filament on oriC DNA; dsDNA binds to the exterior of the filament while single-stranded (ss)DNA is stabiized in the filament's interior. The ATP-DnaA-oriC complex binds and stabilizes one strand of the AT-rich DNA unwinding element (DUE), permitting loading of DNA polymerase. After initiation quickly degrades to an ADP-DnaA complex that is not apt for DNA replication. Binds acidic phospholipids. This is Chromosomal replication initiator protein DnaA from Desulfotalea psychrophila (strain LSv54 / DSM 12343).